The primary structure comprises 68 residues: Lipopolysaccharide export system ATP-binding protein LptB (68 aa).

Belongs to the ABC transporter superfamily. Outer membrane lipopolysaccharide export (TC 1.B.42) family. As to quaternary structure, component of the lipopolysaccharide transport and assembly complex. The LptBFG transporter is composed of two ATP-binding proteins (LptB) and two transmembrane proteins (LptF and LptG).

The protein localises to the cytoplasm. It is found in the cell inner membrane. In terms of biological role, part of the ABC transporter complex LptBFG involved in the translocation of lipopolysaccharide (LPS) from the inner membrane to the outer membrane. Probably responsible for energy coupling to the transport system. In Klebsiella oxytoca, this protein is Lipopolysaccharide export system ATP-binding protein LptB (lptB).